We begin with the raw amino-acid sequence, 303 residues long: Zinc transporter ZIP9 (303 aa).

The helical transmembrane segment at 7–27 threads the bilayer; it reads ISLLSLAMLVGCYVSGIIPLA. Asparagine 29 is a glycosylation site (N-linked (GlcNAc...) asparagine). 5 helical membrane passes run 35–55, 102–122, 142–162, 172–192, and 206–226; these read LKLV…AVIV, AYIG…DQIG, ITTT…LGAA, LIVF…LVSF, and HLLV…LGLS. N-linked (GlcNAc...) asparagine glycosylation is present at asparagine 237. The next 2 membrane-spanning stretches (helical) occupy residues 240–260 and 282–302; these read GVAM…HVLP and LEVC…IGHQ.

The protein belongs to the ZIP transporter (TC 2.A.5) family.

The protein resides in the golgi apparatus. The protein localises to the trans-Golgi network membrane. It localises to the cell membrane. It is found in the cytoplasm. Its subcellular location is the perinuclear region. The protein resides in the mitochondrion. The protein localises to the nucleus. It catalyses the reaction Zn(2+)(in) = Zn(2+)(out). Its function is as follows. Transports zinc ions across cell and organelle membranes into the cytoplasm and regulates intracellular zinc homeostasis. Participates in the zinc ions efflux out of the secretory compartments. Also functions as a membrane androgen receptor that mediates, through a G protein, the non-classical androgen signaling pathway, characterized by the activation of MAPK3/MAPK1 (Erk1/2) and transcription factors CREB1 or ATF1. Moreover, has dual functions as a membrane-bound androgen receptor and as an androgen-dependent zinc transporter both of which are mediated through an inhibitory G protein (Gi) that mediates both MAP kinase and zinc signaling leading to the androgen-dependent apoptotic process. In Xenopus tropicalis (Western clawed frog), this protein is Zinc transporter ZIP9.